Reading from the N-terminus, the 83-residue chain is Three-finger toxin MALT0058C (83 aa).

An N-terminal signal peptide occupies residues 1–21 (MKTLLLTLVVVTIVCLDFGHT). Intrachain disulfides connect cysteine 24-cysteine 45, cysteine 38-cysteine 62, cysteine 64-cysteine 75, and cysteine 76-cysteine 81.

Belongs to the three-finger toxin family. Short-chain subfamily. Type I alpha-neurotoxin sub-subfamily. In terms of tissue distribution, expressed by the venom gland.

The protein resides in the secreted. Its function is as follows. Binds to muscle nicotinic acetylcholine receptor (nAChR) and inhibits acetylcholine from binding to the receptor, thereby impairing neuromuscular transmission. This chain is Three-finger toxin MALT0058C, found in Micrurus altirostris (Uruguayan coral snake).